The primary structure comprises 620 residues: DNA mismatch repair protein MutL (620 aa).

This sequence belongs to the DNA mismatch repair MutL/HexB family.

Its function is as follows. This protein is involved in the repair of mismatches in DNA. It is required for dam-dependent methyl-directed DNA mismatch repair. May act as a 'molecular matchmaker', a protein that promotes the formation of a stable complex between two or more DNA-binding proteins in an ATP-dependent manner without itself being part of a final effector complex. The protein is DNA mismatch repair protein MutL of Clostridium tetani (strain Massachusetts / E88).